Consider the following 217-residue polypeptide: Trimethylamine corrinoid protein (217 aa).

Residues Met1–Lys92 enclose the B12-binding N-terminal domain. The B12-binding domain occupies Leu94–Val217. Residue His107 participates in methylcob(III)alamin binding.

This sequence belongs to the methylamine corrinoid protein family. Can form a complex with MttB.

It functions in the pathway one-carbon metabolism; methanogenesis from trimethylamine. Its function is as follows. Acts probably as a methyl group carrier between MttB and either MtbA or MtaA. This Methanosarcina barkeri protein is Trimethylamine corrinoid protein.